The sequence spans 580 residues: PX domain-containing protein kinase-like protein (580 aa).

Positions 14 to 126 (LDDTVPLTAA…KFLDPNNYSA (113 aa)) constitute a PX domain. The region spanning 88–481 (FIAERQKGLQ…VENSEEQPVK (394 aa)) is the Protein kinase domain. Residues 433 to 551 (EQKQIHQHRR…LPQAVNGVNR (119 aa)) are disordered. 2 stretches are compositionally biased toward basic residues: residues 437 to 448 (IHQHRRLTRAQS) and 457 to 469 (KRRK…KSKR). A compositionally biased stretch (low complexity) spans 483–514 (SNANNSAGSGASSPLTSPSSPTPPSTAGLSSA). The segment covering 515-531 (LPPPPPPPPPPPPPAGP) has biased composition (pro residues). The WH2 domain occupies 549 to 568 (VNRGALLSSIQNFQKGTLRK).

The protein belongs to the protein kinase superfamily.

The protein resides in the cytoplasm. The protein localises to the cell membrane. Binds to and modulates brain Na,K-ATPase subunits ATP1B1 and ATP1B3 and may thereby participate in the regulation of electrical excitability and synaptic transmission. May not display kinase activity. This is PX domain-containing protein kinase-like protein from Rattus norvegicus (Rat).